Consider the following 437-residue polypeptide: Chromosomal replication initiator protein DnaA (437 aa).

Residues 1–74 are domain I, interacts with DnaA modulators; it reads MNLAWNKILE…EACGDKIPVE (74 aa). The interval 74–98 is domain II; it reads EILIETKATSPLQSFLEKSFDQKDF. The segment at 99–315 is domain III, AAA+ region; the sequence is QFNPDYTFET…GALNDIYLYK (217 aa). G142, G144, K145, and T146 together coordinate ATP. Positions 316 to 437 are domain IV, binds dsDNA; it reads KSYSLLFLNL…ERISSKYKLQ (122 aa).

It belongs to the DnaA family. As to quaternary structure, oligomerizes as a right-handed, spiral filament on DNA at oriC.

Its subcellular location is the cytoplasm. In terms of biological role, plays an essential role in the initiation and regulation of chromosomal replication. ATP-DnaA binds to the origin of replication (oriC) to initiate formation of the DNA replication initiation complex once per cell cycle. Binds the DnaA box (a 9 base pair repeat at the origin) and separates the double-stranded (ds)DNA. Forms a right-handed helical filament on oriC DNA; dsDNA binds to the exterior of the filament while single-stranded (ss)DNA is stabiized in the filament's interior. The ATP-DnaA-oriC complex binds and stabilizes one strand of the AT-rich DNA unwinding element (DUE), permitting loading of DNA polymerase. After initiation quickly degrades to an ADP-DnaA complex that is not apt for DNA replication. Binds acidic phospholipids. The chain is Chromosomal replication initiator protein DnaA from Leptospira borgpetersenii serovar Hardjo-bovis (strain JB197).